The sequence spans 195 residues: MASKYAVKLQTDFDNPKWIKRHKFMFDYLDINGNGQITLDEIVSKASDDICKNLGATPAQTQRHQDCVEAFFRGCGLEYGKETKFPEFLEGWKNLANADLAKWARNEPTLIREWGDAVFDIFDKDGSGTITLDEWKAYGRISGISPSEEDCEKTFQHCDLDNSGELDVDEMTRQHLGFWYTLDPEADGLYGNGVP.

Positions 1–6 (MASKYA) are excised as a propeptide. 4 EF-hand domains span residues 17-52 (KWIK…DICK), 53-88 (NLGA…FPEF), 110-145 (LIRE…SGIS), and 146-181 (PSEE…FWYT). Ca(2+) is bound by residues aspartate 30, asparagine 32, asparagine 34, glutamine 36, and glutamate 41. Residues aspartate 123, aspartate 125, serine 127, threonine 129, glutamate 134, aspartate 159, aspartate 161, serine 163, glutamate 165, and glutamate 170 each coordinate Ca(2+).

It belongs to the aequorin family.

Functionally, ca(2+)-dependent bioluminescence photoprotein. Displays an emission peak at 495 nm (blue light). Trace amounts of calcium ion trigger the intramolecular oxidation of the chromophore, coelenterazine into coelenteramide and CO(2) with the concomitant emission of light. The chain is Obelin from Obelia geniculata (Knotted thread hydroid).